A 106-amino-acid polypeptide reads, in one-letter code: ATP-dependent Clp protease adapter protein ClpS (106 aa).

Belongs to the ClpS family. Binds to the N-terminal domain of the chaperone ClpA.

In terms of biological role, involved in the modulation of the specificity of the ClpAP-mediated ATP-dependent protein degradation. This Salmonella agona (strain SL483) protein is ATP-dependent Clp protease adapter protein ClpS.